We begin with the raw amino-acid sequence, 516 residues long: MASSPITDFYAGRNVFITGATGFVGVTIVEKLLRDVPNVGTLYLLMRAKKGKSVQERLEELKKNSVFDKFKELQLQSRLSKIVPIEGDVGLEHLGISPKDRQTLIDNVNVVFHSAATLDFFQSLKETTNINLRGTRRVVELCQQIKNLDALVHVSSAYVNAYLTKVEEKLYPAPEDPEKIIQLSETLNDDALKELEPKLLKDHPNTYTFTKHLAEHEVANVASKFPCGIVRPSMITAAWKEPIPGWTISKNGPQGFFMGASKGVLRRLPLDPSIIMDYIPIDVVVNGIITTGYYVNSLQAKNGGRPADLQIFHLTSSTYKPFRFELMTDKINSYLHDYPLNSAVWYPNLRLVKSLWVFRLSAILFHFIPAIILDLVTKIGGGRPILVRLHKNVWNSLNTLEKFIFTEWHFDSKRLLALSKTLNIVDKKKFFIDIGELAWDEYFSNTILGVRQYLSKEPIKNLEKARRKDKILLGLHVALQLSFWYGVFKLIVCLTGISTAKAALVLPVLYYLFGLL.

Transmembrane regions (helical) follow at residues 356–376, 471–491, and 496–516; these read WVFRLSAILFHFIPAIILDLV, ILLGLHVALQLSFWYGVFKLI, and GISTAKAALVLPVLYYLFGLL.

This sequence belongs to the fatty acyl-CoA reductase family.

The protein localises to the membrane. The enzyme catalyses a long-chain fatty acyl-CoA + 2 NADPH + 2 H(+) = a long-chain primary fatty alcohol + 2 NADP(+) + CoA. Functionally, catalyzes the reduction of C16 or C18 fatty acyl-CoA to fatty alcohols. The protein is Putative fatty acyl-CoA reductase CG8306 of Drosophila melanogaster (Fruit fly).